Consider the following 319-residue polypeptide: Beta-xylosidase (319 aa).

D14 acts as the Proton acceptor in catalysis. The Proton donor role is filled by E222.

This sequence belongs to the glycosyl hydrolase 43 family.

It carries out the reaction Hydrolysis of (1-&gt;4)-beta-D-xylans, to remove successive D-xylose residues from the non-reducing termini.. Exoxylanase capable of acting on certain xylans and xylooligosaccharides. This chain is Beta-xylosidase (xynB), found in Xylanibacter ruminicola (Prevotella ruminicola).